The chain runs to 79 residues: TALFLAMHYTSDIATAFSSVAHICRDVNYGWLIRNMHANGASFLFICIYLHIGRGLYYGSYLYKETWNIGVILLLLTMM.

3 helical membrane passes run 1 to 7 (TALFLAM), 31 to 52 (WLIR…YLHI), and 67 to 79 (WNIG…LTMM). Heme b is bound by residues histidine 37 and histidine 51.

It belongs to the cytochrome b family. In terms of assembly, the cytochrome bc1 complex contains 3 respiratory subunits (MT-CYB, CYC1 and UQCRFS1), 2 core proteins (UQCRC1 and UQCRC2) and probably 6 low-molecular weight proteins. Requires heme b as cofactor.

The protein resides in the mitochondrion inner membrane. Component of the ubiquinol-cytochrome c reductase complex (complex III or cytochrome b-c1 complex) that is part of the mitochondrial respiratory chain. The b-c1 complex mediates electron transfer from ubiquinol to cytochrome c. Contributes to the generation of a proton gradient across the mitochondrial membrane that is then used for ATP synthesis. The sequence is that of Cytochrome b (mt-cyb) from Julidochromis regani (Convict julie).